The following is a 904-amino-acid chain: MNEYRSSLVFATPDLPLRDDVRRLGALVGDLLAEQVSAEFLDEIERVRTTAISRRESDAPPSTLSEQLTGREPRDAEALVRAFSTYFQVVNIAERVHRIRRRREYQRSGTDTPQPDGLHDALRRLKAQGVTLDELSQWLPRIDVEPVFTAHPTEAVRRALLEKEQLMVASLVDNLDGMRTPNERTSDAARFRMALTASWQTADSSPVRPTVGDEREHVGFYLTQVLYRVIPVMYETLEHAIEETYGSVPALPRLLRFGTWVGGDMDGNPNVDANTIAGTLDAQRRAVLDRYQKELWQLASLLSQSTTLVQVSPELMTQLERYRALLPDAAARSRPRHGDMPYRLLNDLMRARLQATLDDADGAYTAPSELEDDLQLILDSLQANKGLHAGWFAVRRLLWRVRSFGFHLARLDVRQESSVHARAVADALGQTDWDAQDATRRAAVLGPYACGQEALPRVQDEGNARLDAVFAALADARTRHGADALGSYIISMAHNRADVLTVLALARRGGLVDAAGAVPLDIVPLFETVDDLRGGTGTVQDLLADPVYRQHLAARGDTQMVMLGYSDSGKDGGIAASRWGLQRAQVELLEAAADLGVRLTFFHGRGGSIARGGGKTSRALDAAPRGSVDGRLRVTEQGEVIHRKYGIRALALRSLEQMTGAVLLSSLRPRAPEPREARWRPVMDLVAERSTVAYRAFVAAPEFMQYFRLATPIDVIERMTLGSRPSRRLGQDAALSNLRAIPWVFAWSQARAVIPGWYGVGSGLQAAVDAGHEDSLREMAQDWPFFRTFLDDVAMVLSKGDLNIAELFSRLSGDLHTRFFPLIRDELALTKGWVKALLQQQSLLQHDPRLALSIRLRNPYIDPISVLQVDLLQRWRATDGEDEALLRALVACVNGVSQGLQNTG.

The segment at 52–71 (ISRRESDAPPSTLSEQLTGR) is disordered. Catalysis depends on residues His151 and Lys570.

This sequence belongs to the PEPCase type 1 family. Requires Mg(2+) as cofactor.

The catalysed reaction is oxaloacetate + phosphate = phosphoenolpyruvate + hydrogencarbonate. Forms oxaloacetate, a four-carbon dicarboxylic acid source for the tricarboxylic acid cycle. The polypeptide is Phosphoenolpyruvate carboxylase (Xanthomonas oryzae pv. oryzae (strain MAFF 311018)).